The chain runs to 301 residues: Nitric oxide synthase-interacting protein (301 aa).

Position 36 is a phosphoserine (Ser36). Positions 55 to 75 are U-box-like; that stretch reads DPVVTPDGYLYEREAILEYIL. A Nuclear localization signal motif is present at residues 78–101; it reads KKEIARQMKAYEKQRGTRREEQKE. Ser107 is subject to Phosphoserine. The segment at 132 to 157 is disordered; it reads KALSGTSPDDVQPGPSVGPPSKDKDK.

This sequence belongs to the NOSIP family. Interacts with NOS1 and NOS3. Interacts with PP2A holoenzyme, containing PPP2CA, PPP2CB, PPP2R1A and PPP2R2A subunits. Expressed in heart, brain and lung. Present in endothelial cells (at protein level).

It localises to the cytoplasm. It is found in the nucleus. It carries out the reaction S-ubiquitinyl-[E2 ubiquitin-conjugating enzyme]-L-cysteine + [acceptor protein]-L-lysine = [E2 ubiquitin-conjugating enzyme]-L-cysteine + N(6)-ubiquitinyl-[acceptor protein]-L-lysine.. In terms of biological role, E3 ubiquitin-protein ligase that is essential for proper development of the forebrain, the eye, and the face. Catalyzes monoubiquitination of serine/threonine-protein phosphatase 2A (PP2A) catalytic subunit PPP2CA/PPP2CB. Negatively regulates nitric oxide production by inducing NOS1 and NOS3 translocation to actin cytoskeleton and inhibiting their enzymatic activity. The chain is Nitric oxide synthase-interacting protein (NOSIP) from Homo sapiens (Human).